The primary structure comprises 388 residues: Probable peptidoglycan glycosyltransferase FtsW (388 aa).

The Cytoplasmic portion of the chain corresponds to 1 to 19 (MMSPSTSAPHNQPIQPELD). A helical membrane pass occupies residues 20–40 (VLLVSTVLLLLGLGLVMVYSA). Residues 41–55 (SIAIAEAKFGEGSSY) lie on the Periplasmic side of the membrane. The chain crosses the membrane as a helical span at residues 56 to 76 (YFLARQASYILAGIAVGIGCF). Over 77–89 (RIPLRWWQAYSHY) the chain is Cytoplasmic. The chain crosses the membrane as a helical span at residues 90–110 (LLGLGILLLLVVLIPGISHEI). Over 111-116 (NGSRRW) the chain is Periplasmic. Residues 117–137 (IPLGITSFQPSELMKLIILIF) traverse the membrane as a helical segment. The Cytoplasmic segment spans residues 138–151 (TADYVVRKAAFKDH). The helical transmembrane segment at 152 to 172 (FFKGFLPILALLTIVSLLLLM) threads the bilayer. The Periplasmic segment spans residues 173–175 (EPD). The next 2 membrane-spanning stretches (helical) occupy residues 176 to 196 (LGATVVIAAIVLSIMFMNGMS) and 197 to 217 (LKMFFGLICLVPVLLALLIII). At 218–284 (EPYRMDRINA…DFMFAVLAEE (67 aa)) the chain is on the periplasmic side. Residues 285–305 (LGFAGVVTVISLFFFLLVRIF) traverse the membrane as a helical segment. Residues 306–324 (KVGRTAARLGDQFGSLVAQ) are Cytoplasmic-facing. The helical transmembrane segment at 325-345 (GIGVWLGLQAFINMGVNMGLL) threads the bilayer. Residues 346–351 (PTKGLT) are Periplasmic-facing. Residues 352–372 (LPFMSYGGSSIVINSIAIAIL) form a helical membrane-spanning segment. Residues 373–388 (LRIDWENRLKRRGLNA) lie on the Cytoplasmic side of the membrane.

The protein belongs to the SEDS family. FtsW subfamily.

The protein localises to the cell inner membrane. It catalyses the reaction [GlcNAc-(1-&gt;4)-Mur2Ac(oyl-L-Ala-gamma-D-Glu-L-Lys-D-Ala-D-Ala)](n)-di-trans,octa-cis-undecaprenyl diphosphate + beta-D-GlcNAc-(1-&gt;4)-Mur2Ac(oyl-L-Ala-gamma-D-Glu-L-Lys-D-Ala-D-Ala)-di-trans,octa-cis-undecaprenyl diphosphate = [GlcNAc-(1-&gt;4)-Mur2Ac(oyl-L-Ala-gamma-D-Glu-L-Lys-D-Ala-D-Ala)](n+1)-di-trans,octa-cis-undecaprenyl diphosphate + di-trans,octa-cis-undecaprenyl diphosphate + H(+). Its pathway is cell wall biogenesis; peptidoglycan biosynthesis. Its function is as follows. Peptidoglycan polymerase that is essential for cell division. The polypeptide is Probable peptidoglycan glycosyltransferase FtsW (Nitrosomonas europaea (strain ATCC 19718 / CIP 103999 / KCTC 2705 / NBRC 14298)).